We begin with the raw amino-acid sequence, 1096 residues long: MPPNFFQKPETALKRAHELISVGKEMDALETLHDTIKSKRHKQWTKTHEAIMLKHMELCVSLRRPHMAKDALFQYKTLTQQVAIKSLETVIQRFLELAQQKTEEAQKTSIEKVEEIDDLDQADAPENLLLSAVSGDAAQDRMDRTVLSPWLRFLWDSYRNCLDLLRNTAVVEQLYHRIARQSFEFCAKYQRRTEFRKLCDNLRLHLTQIQKHQHLAHVVKLTSAESLTLMQDTRLIQLDTAIQMELWQEAYRSAEDVHGMMQLSKDKDERMVKPASYVNYYDKLALVFWKAGNRLFHAAALLQKYIIYKDMKKTFSMEEAMDQATRVLLATLAIPDGADNPSDLTRHLDIEEQHIANMRLLSNLLRLPVAPTRAGILKEITRLNLPDVAVESARTLYRLLECNFAPLRLASQIQAELTKVTELNRAEYNQYVEALKGVTATKIIKQISVIYDTLSIGRIQKVIPFYNGDELERFLVDIAKHRYVKARIDHRGGSIHFGAADAALSGFFDLEVSDGFGGEAEQVAVEDIRNHLQSMYNNLRDAVQVLDYEKIKRAATDDLKRHAEIYLYHKDADYERILLRRKKIESYKETSERQKLEKCQQAQAEANRKEEQRRAEEMRRLEQENIEKEKLRRLAEQEEIDRKVRAEKMKKIQATPIYQAIVKDHGEEAFQNMDPDSVLREQRDRLDEQRREQQARLQQQEKKFDHLIRAYHLQEMVARKAISDNFAVKAPQNHDSYEKRRVENAIKDHENAVAVYERMQKVRKDPDAAAFLESVKKARADDFNKKIRGFGRRNCVMRNENVLKNRHELPKEGAEERMASAREVAEQTRRDEQEKERRAVRESQRPSKREIVENSEMDSDWRKSAQPTQPRTISSKPFGERFVEGERYRESGAVTASEADSGPWVRGNVTGSQRQQDVPIRNIERPAVPSRFSNREQARGEADSTTNWRKGQVAQRDRDQSVGKQPLMEKRGEPSGAQLHDVKAVATPSPADAGPWRRGMIVARDQADSSQRTSAATPTTQPWRPSRLRQADGAPVNGAPSGRILEGSGSNEPSIGKWNRSIQRTGDSHGAQSFRGISQHQQRRGAADDDRNWRQK.

Residues 323–502 (QATRVLLATL…GSIHFGAADA (180 aa)) form the PCI domain. 3 coiled-coil regions span residues 591-643 (SERQ…IDRK), 677-761 (SVLR…RMQK), and 811-839 (KEGA…ERRA). The span at 808-852 (ELPKEGAEERMASAREVAEQTRRDEQEKERRAVRESQRPSKREIV) shows a compositional bias: basic and acidic residues. The disordered stretch occupies residues 808-1096 (ELPKEGAEER…ADDDRNWRQK (289 aa)). Positions 865–875 (AQPTQPRTISS) are enriched in polar residues. 3 stretches are compositionally biased toward basic and acidic residues: residues 878–890 (FGER…RYRE), 933–942 (SNREQARGEA), and 955–973 (QRDR…KRGE). Residues 1008 to 1023 (DSSQRTSAATPTTQPW) are compositionally biased toward polar residues. Over residues 1085–1096 (GAADDDRNWRQK) the composition is skewed to basic and acidic residues.

The protein belongs to the eIF-3 subunit A family. As to quaternary structure, component of the eukaryotic translation initiation factor 3 (eIF-3) complex.

It is found in the cytoplasm. RNA-binding component of the eukaryotic translation initiation factor 3 (eIF-3) complex, which is involved in protein synthesis of a specialized repertoire of mRNAs and, together with other initiation factors, stimulates binding of mRNA and methionyl-tRNAi to the 40S ribosome. The eIF-3 complex specifically targets and initiates translation of a subset of mRNAs involved in cell proliferation. The polypeptide is Eukaryotic translation initiation factor 3 subunit A (Brugia malayi (Filarial nematode worm)).